Here is a 1024-residue protein sequence, read N- to C-terminus: Beta-galactosidase (1024 aa).

Residues Asn-103 and Asp-202 each coordinate substrate. Asp-202 contacts Na(+). The Mg(2+) site is built by Glu-417, His-419, and Glu-462. Substrate contacts are provided by residues Glu-462 and 538–541 (EYAH). Glu-462 (proton donor) is an active-site residue. Glu-538 (nucleophile) is an active-site residue. Asn-598 is a Mg(2+) binding site. 2 residues coordinate Na(+): Phe-602 and Asn-605. The substrate site is built by Asn-605 and Trp-1000.

Belongs to the glycosyl hydrolase 2 family. As to quaternary structure, homotetramer. Mg(2+) is required as a cofactor. It depends on Na(+) as a cofactor.

The catalysed reaction is Hydrolysis of terminal non-reducing beta-D-galactose residues in beta-D-galactosides.. This is Beta-galactosidase from Shigella sonnei (strain Ss046).